Here is a 143-residue protein sequence, read N- to C-terminus: MHLTLFKELLKQPKPKFHFEIEPNVSFLAVEEGPASLRSYSIGNVSRIYDGIRVPPKPEEPLNCCQSGCAICVWDVYADDLEEYNRARRKAKRHYLDKHLPVPPDLAKVSLKETSSLEELPPQLKAFVLLEKRLMKDKQSKNN.

The 46-residue stretch at 48–93 folds into the Oxidoreductase-like domain; it reads IYDGIRVPPKPEEPLNCCQSGCAICVWDVYADDLEEYNRARRKAKR.

This sequence belongs to the UPF0651 family.

It localises to the mitochondrion. This chain is UPF0651 protein P31B10.02, mitochondrial, found in Schizosaccharomyces pombe (strain 972 / ATCC 24843) (Fission yeast).